Consider the following 155-residue polypeptide: S-ribosylhomocysteine lyase (155 aa).

H58, H62, and C125 together coordinate Fe cation.

The protein belongs to the LuxS family. As to quaternary structure, homodimer. Fe cation serves as cofactor.

It catalyses the reaction S-(5-deoxy-D-ribos-5-yl)-L-homocysteine = (S)-4,5-dihydroxypentane-2,3-dione + L-homocysteine. Involved in the synthesis of autoinducer 2 (AI-2) which is secreted by bacteria and is used to communicate both the cell density and the metabolic potential of the environment. The regulation of gene expression in response to changes in cell density is called quorum sensing. Catalyzes the transformation of S-ribosylhomocysteine (RHC) to homocysteine (HC) and 4,5-dihydroxy-2,3-pentadione (DPD). The chain is S-ribosylhomocysteine lyase from Helicobacter pylori (strain HPAG1).